The following is a 1352-amino-acid chain: Stress response protein NST1 (1352 aa).

Residues 1 to 12 (MSSKSQQPPTGL) are compositionally biased toward polar residues. Disordered stretches follow at residues 1 to 66 (MSSK…FFNF), 216 to 422 (NANA…TQSS), 503 to 522 (NGLR…VEVD), 531 to 616 (DHRA…FLSF), 651 to 693 (RRSV…AEEG), 726 to 880 (LREL…IAKE), 978 to 1118 (GLKS…DDAF), 1139 to 1275 (GSLI…GAGV), and 1307 to 1336 (GGTA…HQQQ). The segment covering 16–25 (AAKKRAKKAA) has biased composition (basic residues). The span at 26-45 (KQSQNPQPQSAPQTSSQTPA) shows a compositional bias: low complexity. A compositionally biased stretch (pro residues) spans 46-59 (SVPPLPPASVPDPL). The segment covering 218–229 (NARSFPSPQQTI) has biased composition (polar residues). The span at 242–254 (REEEYDDEEEIEE) shows a compositional bias: acidic residues. Over residues 268–277 (KKNKKKKKKG) the composition is skewed to basic residues. Residues 287–300 (VEPPAPLPPLPPPS) show a composition bias toward pro residues. Positions 317–330 (LPTHQPQPLSQQPP) are enriched in low complexity. The span at 331 to 349 (SLNPLPPPAPASAPTPTPP) shows a compositional bias: pro residues. The segment covering 368–388 (PARSARAAGKAPASAAPPHNA) has biased composition (low complexity). Residues 531–541 (DHRAPELHDHD) are compositionally biased toward basic and acidic residues. Over residues 542–583 (PDDLDGEESEEYDDDDDYADDDELDDDDIGTDEADVGDEIDE) the composition is skewed to acidic residues. Residues 653–664 (SVREEQNLRDMQ) are compositionally biased toward basic and acidic residues. A compositionally biased stretch (acidic residues) spans 665 to 680 (EETDEEEEEEDDDESR). Composition is skewed to basic and acidic residues over residues 681–693 (DEPM…AEEG), 726–749 (LREL…EAQK), and 759–880 (QKAE…IAKE). Residues 712–943 (AYRERVAKQR…AAQQAQRERA (232 aa)) adopt a coiled-coil conformation. Residues 1008 to 1020 (TNATPGRSMQKTP) show a composition bias toward polar residues. The segment covering 1153 to 1164 (PTPPAPIAPPNL) has biased composition (pro residues). Composition is skewed to polar residues over residues 1173 to 1186 (SDGQ…LRST) and 1208 to 1219 (QPQQRRPTTSWD).

This sequence belongs to the NST1 family.

The protein resides in the cytoplasm. Its function is as follows. May act as a negative regulator of salt tolerance. This Cryptococcus neoformans var. neoformans serotype D (strain JEC21 / ATCC MYA-565) (Filobasidiella neoformans) protein is Stress response protein NST1 (NST1).